The sequence spans 78 residues: Large ribosomal subunit protein bL28 (78 aa).

The protein belongs to the bacterial ribosomal protein bL28 family.

This chain is Large ribosomal subunit protein bL28, found in Prochlorococcus marinus (strain MIT 9301).